The primary structure comprises 313 residues: MFLPSPNNLSGLNQNILEELLRDKRSPNTRRTYAKALKDFFLTMAGEEPSPDVIAWFLSLDHFQAIAMVLRYRAELLAKDLKPATINVRLAAIKSLVNYARRVGKCQYTLEDVEGLKAETYRDTTGVSPTSFKQITDHITPDSLKGKRDLAIMRLLWDNALRRAEVCGLNVGDYQPTERQLLIKGKGKLGKQAITLSAKGMALINQWLTAIGPRPKNEPLFCTLDRATFGHRLSGNAIYNLVRTSAESAGIHKVMSPHRVRHSAITAALEATNGDTRKVQKLSRHSNLNTLMIYDDNRHQHQAQITDILADLL.

A Core-binding (CB) domain is found at 7-101 (NNLSGLNQNI…AIKSLVNYAR (95 aa)). The Tyr recombinase domain maps to 122–307 (RDTTGVSPTS…RHQHQAQITD (186 aa)). Catalysis depends on residues Arg-162, Lys-188, His-258, Arg-261, and His-285. The O-(3'-phospho-DNA)-tyrosine intermediate role is filled by Tyr-294.

It belongs to the 'phage' integrase family.

The protein resides in the cytoplasm. Functionally, site-specific tyrosine recombinase, which acts by catalyzing the cutting and rejoining of the recombining DNA molecules. The chain is Tyrosine recombinase slr0733 from Synechocystis sp. (strain ATCC 27184 / PCC 6803 / Kazusa).